The primary structure comprises 1231 residues: STE20-like serine/threonine-protein kinase (1231 aa).

Position 14 is a phosphoserine (Ser14). In terms of domain architecture, Protein kinase spans 34-292; it reads WETIGELGDG…TSQLLQHPFV (259 aa). ATP contacts are provided by residues 40-48 and Lys63; that span reads LGDGAFGKV. The active-site Proton acceptor is Asp155. Thr183 is modified (phosphothreonine). The residue at position 189 (Ser189) is a Phosphoserine. A disordered region spans residues 309-351; that stretch reads AEVTEEVEDGKEEDDDEEIENSLPIPTNKRASSDLSIASSEED. Positions 312 to 328 are enriched in acidic residues; sequence TEEVEDGKEEDDDEEIE. Residues Ser330, Ser340, Ser341, Ser344, Ser347, Ser348, Ser354, and Ser372 each carry the phosphoserine modification. The span at 337–347 shows a compositional bias: polar residues; it reads KRASSDLSIAS. The segment at 405–478 is disordered; sequence PDRATELPES…KQPVLENKLV (74 aa). Composition is skewed to basic and acidic residues over residues 407–428 and 446–478; these read RATE…RLPD and DHAV…NKLV. Ser507 is subject to Phosphoserine. Positions 516–531 are enriched in basic and acidic residues; it reads THEKLRKDDTTQKDVI. The interval 516 to 757 is disordered; the sequence is THEKLRKDDT…TGSTADNSSI (242 aa). Ser536 and Ser554 each carry phosphoserine. Positions 601 to 613 are enriched in basic and acidic residues; that stretch reads TDQKLVENTHEKQ. A compositionally biased stretch (polar residues) spans 615–624; that stretch reads PISSETTLDT. Ser641 and Ser661 each carry phosphoserine. A compositionally biased stretch (acidic residues) spans 641-660; it reads STEEVEVEGAVSETDEEDVQ. Residues 683 to 692 are compositionally biased toward low complexity; that stretch reads EAPAQVEVQV. A compositionally biased stretch (pro residues) spans 693 to 706; the sequence is PVPPQPSEPPPAPI. At Ser775 the chain carries Phosphoserine. Residue Thr810 is modified to Phosphothreonine. Ser814 is modified (phosphoserine). Residues 822 to 1065 adopt a coiled-coil conformation; that stretch reads LRRQELRELR…LKNRQTQERA (244 aa). The UVR domain occupies 871–906; it reads DQEIENLEKQQKQTIERLEQEHTNRLRDEAKRIKGE. The residue at position 1093 (Thr1093) is a Phosphothreonine. Positions 1105-1179 form a coiled coil; sequence SAQEEKRQKN…ELKEWREKLR (75 aa).

The protein belongs to the protein kinase superfamily. STE Ser/Thr protein kinase family. STE20 subfamily. Post-translationally, proteolytically cleaved by caspase-3. Autophosphorylated. In terms of tissue distribution, ubiquitously expressed.

Its subcellular location is the cytoplasm. The enzyme catalyses L-seryl-[protein] + ATP = O-phospho-L-seryl-[protein] + ADP + H(+). It catalyses the reaction L-threonyl-[protein] + ATP = O-phospho-L-threonyl-[protein] + ADP + H(+). In terms of biological role, mediates apoptosis and actin stress fiber dissolution. In Cavia porcellus (Guinea pig), this protein is STE20-like serine/threonine-protein kinase (SLK).